Here is a 457-residue protein sequence, read N- to C-terminus: Chromosomal replication initiator protein DnaA (457 aa).

The tract at residues 1 to 90 (MDTNNNIEKE…HSVDVRIEVA (90 aa)) is domain I, interacts with DnaA modulators. The interval 91 to 112 (PKIQINAQSNINYKAIKTSVKD) is domain II. The segment at 113-323 (SYTFENFVVG…GAIIKISVNA (211 aa)) is domain III, AAA+ region. The ATP site is built by Gly-153, Gly-155, Lys-156, and Thr-157. The interval 324–457 (NLMNASIDLN…DKKTAFNSSE (134 aa)) is domain IV, binds dsDNA.

The protein belongs to the DnaA family. Oligomerizes as a right-handed, spiral filament on DNA at oriC. Interacts via domain I with HobA. In a crystal with domains I and II of DnaA HobA forms tetramers with DnaA fragments bound at the dimer interface of the tetramer.

It is found in the cytoplasm. The protein localises to the cell inner membrane. Functionally, plays an essential role in the initiation and regulation of chromosomal replication. ATP-DnaA binds to the origin of replication (oriC) to initiate formation of the DNA replication initiation complex once per cell cycle. Binds the DnaA box (a 9 base pair repeat at the origin) and separates the double-stranded (ds)DNA. Forms a right-handed helical filament on oriC DNA; dsDNA binds to the exterior of the filament while single-stranded (ss)DNA is stabiized in the filament's interior. The ATP-DnaA-oriC complex binds and stabilizes one strand of the AT-rich DNA unwinding element (DUE), permitting loading of DNA polymerase. After initiation quickly degrades to an ADP-DnaA complex that is not apt for DNA replication. Binds acidic phospholipids. In terms of biological role, the DnaA box is 5'-TTATC[CA]A[CA]A-3' in this bacterium cycle. Multiple discrete DnaA-oriC complexes can be seen as DnaA levels increase. Binding of DnaA to oriC is increased by HobA; some chi-type structures can be seen by electron microscopy. Strand separation requires the DnaA boxes and adjacent DnaA-trio motifs but works equally well with ADP or ATP. This chain is Chromosomal replication initiator protein DnaA, found in Helicobacter pylori (strain ATCC 700392 / 26695) (Campylobacter pylori).